The primary structure comprises 581 residues: Phosphoglucomutase, cytoplasmic (581 aa).

Positions 1 to 11 (MVFSVAKKDTT) are enriched in basic and acidic residues. Residues 1 to 20 (MVFSVAKKDTTPYEGQKPGT) are disordered. The alpha-D-glucose 1,6-bisphosphate site is built by R24 and S123. The active-site Phosphoserine intermediate is S123. The Mg(2+) site is built by S123, D298, D300, and D302. Position 123 is a phosphoserine (S123). Residues D302, R303, T366, E385, S387, and K398 each coordinate alpha-D-glucose 1,6-bisphosphate.

This sequence belongs to the phosphohexose mutase family. In terms of assembly, monomer. The cofactor is Mg(2+).

It is found in the cytoplasm. It carries out the reaction alpha-D-glucose 1-phosphate = alpha-D-glucose 6-phosphate. The enzyme catalyses O-phospho-L-seryl-[protein] + alpha-D-glucose 1-phosphate = alpha-D-glucose 1,6-bisphosphate + L-seryl-[protein]. The catalysed reaction is alpha-D-glucose 1,6-bisphosphate + L-seryl-[protein] = O-phospho-L-seryl-[protein] + alpha-D-glucose 6-phosphate. Its function is as follows. Catalyzes the reversible isomerization of alpha-D-glucose 1-phosphate to alpha-D-glucose 6-phosphate. The mechanism proceeds via the intermediate compound alpha-D-glucose 1,6-bisphosphate. This enzyme participates in both the breakdown and synthesis of glucose. This chain is Phosphoglucomutase, cytoplasmic (PGM1), found in Bromus inermis (Smooth brome grass).